A 289-amino-acid polypeptide reads, in one-letter code: Protein SET (289 aa).

The tract at residues 1-42 is disordered; it reads MAPKRQSAILPQPKKPRPVAAPKLEDKSASPGLPKGEKEQQE. At Ala2 the chain carries N,N,N-trimethylalanine. A Phosphoserine modification is found at Ser7. At Pro11 the chain carries N6-acetyllysine. The residue at position 15 (Lys15) is a Phosphoserine. Lys23 is subject to N6-acetyllysine. Phosphoserine occurs at positions 24, 28, and 62. The tract at residues 31-77 is dimerization; that stretch reads PGLPKGEKEQQEAIEHIDEVQNEIDRLNEQASEEILKVEQKYNKLRQ. An N6-acetyllysine modification is found at Lys67. The tract at residues 78–224 is earmuff domain; sequence PFFQKRSELI…ELGEVIKDDI (147 aa). Phosphotyrosine is present on Tyr145. Residue Lys149 is modified to N6-acetyllysine. A Glycyl lysine isopeptide (Lys-Gly) (interchain with G-Cter in ubiquitin) cross-link involves residue Lys153. Disordered regions lie at residues 157-206 and 235-289; these read LNES…TWFT and PDMD…GEDD. Over residues 168–180 the composition is skewed to basic and acidic residues; that stretch reads TEIKWKSGKDLTK. Lys171 carries the N6-acetyllysine modification. The span at 236–289 shows a compositional bias: acidic residues; that stretch reads DMDDEEGEAEDDDDDDEEEEGLEDIDEEGDEDEGEEDDDEDEGEEGEEDEGEDD.

Belongs to the nucleosome assembly protein (NAP) family. Headphone-shaped homodimer. Isoform 1 and isoform 2 interact directly with each other and with ANP32A within the tripartite INHAT (inhibitor of acetyltransferases) complex. Isoform 1 and isoform 2 interact also with histones. Isoform 2 is a omponent of the SET complex, composed of at least ANP32A, APEX1, HMGB2, NME1, SET and TREX1, but not NME2 or TREX2. Within this complex, directly interacts with ANP32A, NME1, HMGB2 and TREX1; the interaction with ANP32A is enhanced after cleavage. Interacts with APBB1, CHTOP, SETBP1, SGO1. Post-translationally, isoform 2 is phosphorylated on Ser-15 and Ser-24. In terms of processing, isoform 2 is acetylated on Lys-11. Some glutamate residues are glycylated by TTLL8. This modification occurs exclusively on glutamate residues and results in a glycine chain on the gamma-carboxyl group. Post-translationally, N-terminus of isoform 1 is methylated by METTL11A/NTM1. Mainly trimethylated. In terms of processing, cleaved after Lys-176 by GZMA. The cleavage inhibits its nucleosome assembly activity and disrupts the inhibition on NME1. As to expression, widely expressed, with higher expression in brain, thymus, spleen and bone marrow, and lower expression in heart, liver and muscle.

It localises to the cytoplasm. The protein resides in the cytosol. The protein localises to the endoplasmic reticulum. Its subcellular location is the nucleus. It is found in the nucleoplasm. Functionally, multitasking protein, involved in apoptosis, transcription, nucleosome assembly and histone chaperoning. Isoform 2 anti-apoptotic activity is mediated by inhibition of the GZMA-activated DNase, NME1. In the course of cytotoxic T-lymphocyte (CTL)-induced apoptosis, GZMA cleaves SET, disrupting its binding to NME1 and releasing NME1 inhibition. Isoform 1 and isoform 2 are potent inhibitors of protein phosphatase 2A. Isoform 1 and isoform 2 inhibit EP300/CREBBP and PCAF-mediated acetylation of histones (HAT) and nucleosomes, most probably by masking the accessibility of lysines of histones to the acetylases. The predominant target for inhibition is histone H4. HAT inhibition leads to silencing of HAT-dependent transcription and prevents active demethylation of DNA. Both isoforms stimulate DNA replication of the adenovirus genome complexed with viral core proteins; however, isoform 2 specific activity is higher. The sequence is that of Protein SET (Set) from Rattus norvegicus (Rat).